We begin with the raw amino-acid sequence, 258 residues long: Acetylglutamate kinase (258 aa).

Substrate-binding positions include 44–45 (GG), Arg-66, and Asn-158. ATP-binding positions include 181–186 (DVSGIL) and 209–211 (IIT).

This sequence belongs to the acetylglutamate kinase family. ArgB subfamily. Homodimer.

The protein resides in the cytoplasm. It catalyses the reaction N-acetyl-L-glutamate + ATP = N-acetyl-L-glutamyl 5-phosphate + ADP. It functions in the pathway amino-acid biosynthesis; L-arginine biosynthesis; N(2)-acetyl-L-ornithine from L-glutamate: step 2/4. Catalyzes the ATP-dependent phosphorylation of N-acetyl-L-glutamate. In Yersinia pestis bv. Antiqua (strain Antiqua), this protein is Acetylglutamate kinase.